Reading from the N-terminus, the 317-residue chain is Vacuolar arginine/histidine antiporter YPQ2 (317 aa).

The Vacuolar portion of the chain corresponds to 1–13 (MSCSNGIWPTVSN). Positions 8–71 (WPTVSNLCGS…AKLTGQLLFQ (64 aa)) constitute a PQ-loop 1 domain. The helical transmembrane segment at 14-34 (LCGSLSFFTSVISLFPQIIET) threads the bilayer. Residues 35–39 (YRDKS) are Cytoplasmic-facing. The helical transmembrane segment at 40–62 (VDGLSPYFLLAWLCGDITSLIGA) threads the bilayer. Residues 63–71 (KLTGQLLFQ) lie on the Vacuolar side of the membrane. A helical membrane pass occupies residues 72–94 (ILLAIYFLLNDSFVCGQYYYYGV). Over 95–143 (LHENKLATVGHEPKPLLPELVENGELLREEEDMIQGGSSAESPRSSRRR) the chain is Cytoplasmic. The residue at position 136 (S136) is a Phosphoserine. Residues 144 to 164 (SAITAALAIAHTISTASAYPL) traverse the membrane as a helical segment. The Vacuolar segment spans residues 165–184 (NVGSTQSQVGPPGDGKNSQL). The chain crosses the membrane as a helical span at residues 185-205 (GTILSWIGASFYVGARIPQLI). The PQ-loop 2 domain occupies 185 to 247 (GTILSWIGAS…SCRFLDNQNK (63 aa)). Residues 206–215 (KNYNRKSTDG) lie on the Cytoplasmic side of the membrane. Residues 216–236 (LSPFLFATTLLCNITYNLSIF) traverse the membrane as a helical segment. The Vacuolar segment spans residues 237 to 249 (TSCRFLDNQNKRE). A helical transmembrane segment spans residues 250–270 (FIVNELPFIFGSAGTIAFDLI). The Cytoplasmic portion of the chain corresponds to 271-317 (YFYQYYILYATDMQLRELERELYSPEEDSAAQLVTERTSLLSGETQT).

The protein belongs to the laat-1 family.

The protein localises to the vacuole membrane. It carries out the reaction L-histidine(out) + L-arginine(in) = L-histidine(in) + L-arginine(out). Functionally, amino acid transporter that moves arginine across the vacuolar membrane. Active during nitrogen starvation when it exports stored vacuolar arginine to the cytosol, for use as a nitrogen source. Has been shown to function as an arginine/histidine antiporter when substrate is present on both sides of the membrane, but may also function as a uniporter. This is Vacuolar arginine/histidine antiporter YPQ2 (YPQ2) from Saccharomyces cerevisiae (strain ATCC 204508 / S288c) (Baker's yeast).